Reading from the N-terminus, the 272-residue chain is Phosphonates import ATP-binding protein PhnC (272 aa).

An ABC transporter domain is found at 2 to 246; that stretch reads LELQRLTKTY…VLATIYGAED (245 aa). 35 to 42 provides a ligand contact to ATP; sequence GPSGAGKS. The disordered stretch occupies residues 248 to 272; that stretch reads ASSGREPAPEREPEDTERHLAEVGR. Residues 254–272 are compositionally biased toward basic and acidic residues; that stretch reads PAPEREPEDTERHLAEVGR.

Belongs to the ABC transporter superfamily. Phosphonates importer (TC 3.A.1.9.1) family. As to quaternary structure, the complex is composed of two ATP-binding proteins (PhnC), two transmembrane proteins (PhnE) and a solute-binding protein (PhnD).

The protein localises to the cell inner membrane. It catalyses the reaction phosphonate(out) + ATP + H2O = phosphonate(in) + ADP + phosphate + H(+). In terms of biological role, part of the ABC transporter complex PhnCDE involved in phosphonates import. Responsible for energy coupling to the transport system. This chain is Phosphonates import ATP-binding protein PhnC, found in Chromohalobacter salexigens (strain ATCC BAA-138 / DSM 3043 / CIP 106854 / NCIMB 13768 / 1H11).